Reading from the N-terminus, the 309-residue chain is MTAHSLIDDIRAAAPDLRGRLLENQSLSDLTWFRVGGPAQVLFSPADEEDLAAFLAALDPSVPVTVIGLGSNLIVRDGGIPGVTIRLGGKAFGSVEIDGETIRAGTAVPDMRLAKAAAEASLDGLAFFRGIPGSVGGALRMNAGAHGGETTDVLTEARGIDRNGAVRSFTHAEMGFRYRHSSAPDDVIFTSATFRGRPGDREGIEAEMERVTAAREAAQPIRERTGGSTFKNPKGGKAWQLIDAAGCRGLIRGGAQVSEMHCNFLINRGGATAADIEGLGEEVRRRVREHSGFELHWEIKRIGVESSEG.

One can recognise an FAD-binding PCMH-type domain in the interval 34 to 221 (RVGGPAQVLF…TAAREAAQPI (188 aa)). The active site involves arginine 179. Serine 228 acts as the Proton donor in catalysis. Glutamate 298 is a catalytic residue.

This sequence belongs to the MurB family. It depends on FAD as a cofactor.

It localises to the cytoplasm. The catalysed reaction is UDP-N-acetyl-alpha-D-muramate + NADP(+) = UDP-N-acetyl-3-O-(1-carboxyvinyl)-alpha-D-glucosamine + NADPH + H(+). The protein operates within cell wall biogenesis; peptidoglycan biosynthesis. Cell wall formation. This Methylorubrum populi (strain ATCC BAA-705 / NCIMB 13946 / BJ001) (Methylobacterium populi) protein is UDP-N-acetylenolpyruvoylglucosamine reductase.